The following is a 468-amino-acid chain: Tapasin-related protein (468 aa).

The first 18 residues, 1-18 (MGTQEGWCLLLCLALSGA), serve as a signal peptide directing secretion. The Lumenal segment spans residues 19 to 405 (AETKPHPAEG…STQVVPPERR (387 aa)). The Ig-like V-type domain maps to 181–297 (PQGTVRTAVE…SLYRAQQIIQ (117 aa)). Cystine bridges form between Cys-212-Cys-283 and Cys-321-Cys-382. The Ig-like C1-type domain occupies 304-394 (PKVRLSLANE…THISLEEPLG (91 aa)). Residues 406–426 (TALGVIFASSLFLLALMFLGL) form a helical membrane-spanning segment. Topologically, residues 427-468 (QRRQAPTGLGLLQAERWETTSCADTQSSHLHEDRTARVSQPS) are cytoplasmic. Residues 449-468 (ADTQSSHLHEDRTARVSQPS) form a disordered region.

In terms of assembly, interacts with peptide-free HLA-A*02-B2M complexes or those loaded with low affinity peptides, likely facilitating peptide exchange onto higher affinity peptides. Interacts with MR1 in a ligand-independent way; this interaction may stabilize MR1 pool and facilitate ligand loading and dissociation.

The protein localises to the cell membrane. The protein resides in the endoplasmic reticulum membrane. It localises to the microsome membrane. It is found in the golgi apparatus membrane. In terms of biological role, component of the antigen processing and presentation pathway, which binds to MHC class I coupled with beta2-microglobulin/B2M. Association between TAPBPR and MHC class I occurs in the absence of a functional peptide-loading complex (PLC). This Homo sapiens (Human) protein is Tapasin-related protein (TAPBPL).